Consider the following 342-residue polypeptide: Nicotinate-nucleotide--dimethylbenzimidazole phosphoribosyltransferase (342 aa).

Residue glutamate 311 is the Proton acceptor of the active site.

This sequence belongs to the CobT family.

It catalyses the reaction 5,6-dimethylbenzimidazole + nicotinate beta-D-ribonucleotide = alpha-ribazole 5'-phosphate + nicotinate + H(+). Its pathway is nucleoside biosynthesis; alpha-ribazole biosynthesis; alpha-ribazole from 5,6-dimethylbenzimidazole: step 1/2. Functionally, catalyzes the synthesis of alpha-ribazole-5'-phosphate from nicotinate mononucleotide (NAMN) and 5,6-dimethylbenzimidazole (DMB). In Shewanella piezotolerans (strain WP3 / JCM 13877), this protein is Nicotinate-nucleotide--dimethylbenzimidazole phosphoribosyltransferase.